Reading from the N-terminus, the 1004-residue chain is UPF0182 protein Noca_1530 (1004 aa).

The segment at 1 to 20 (MSELFDEAPRDPGPPARSGS) is disordered. The next 7 membrane-spanning stretches (helical) occupy residues 26–46 (LIVT…FAGI), 71–91 (VLFF…IYLA), 120–140 (TWLL…SAIG), 183–203 (MAVL…YGGI), 212–232 (LSGA…LAKA), 261–281 (VLPA…LFFV), and 293–313 (VGLA…PGIV). Disordered stretches follow at residues 899-924 (GVST…PPAT) and 974-1004 (LGQK…SPSS). Composition is skewed to low complexity over residues 903–916 (GPGT…QPGD) and 979–1004 (GSAG…SPSS).

This sequence belongs to the UPF0182 family.

It localises to the cell membrane. The protein is UPF0182 protein Noca_1530 of Nocardioides sp. (strain ATCC BAA-499 / JS614).